The chain runs to 334 residues: 6-phosphogluconolactonase (334 aa).

It belongs to the cycloisomerase 2 family.

It carries out the reaction 6-phospho-D-glucono-1,5-lactone + H2O = 6-phospho-D-gluconate + H(+). The protein operates within carbohydrate degradation; pentose phosphate pathway; D-ribulose 5-phosphate from D-glucose 6-phosphate (oxidative stage): step 2/3. In terms of biological role, catalyzes the hydrolysis of 6-phosphogluconolactone to 6-phosphogluconate. In Buchnera aphidicola subsp. Acyrthosiphon pisum (strain Tuc7), this protein is 6-phosphogluconolactonase.